The sequence spans 49 residues: Large ribosomal subunit protein bL33B (49 aa).

This sequence belongs to the bacterial ribosomal protein bL33 family.

The polypeptide is Large ribosomal subunit protein bL33B (Listeria welshimeri serovar 6b (strain ATCC 35897 / DSM 20650 / CCUG 15529 / CIP 8149 / NCTC 11857 / SLCC 5334 / V8)).